The chain runs to 249 residues: Elongation factor Ts (249 aa).

The segment at 82–85 (TDFV) is involved in Mg(2+) ion dislocation from EF-Tu. Positions 215–249 (QAGQLAPEAESTTETADATSETTTEKSSAKKKKKK) are disordered. Over residues 222–236 (EAESTTETADATSET) the composition is skewed to low complexity.

This sequence belongs to the EF-Ts family.

The protein resides in the cytoplasm. Associates with the EF-Tu.GDP complex and induces the exchange of GDP to GTP. It remains bound to the aminoacyl-tRNA.EF-Tu.GTP complex up to the GTP hydrolysis stage on the ribosome. The polypeptide is Elongation factor Ts (Rippkaea orientalis (strain PCC 8801 / RF-1) (Cyanothece sp. (strain PCC 8801))).